The following is a 330-amino-acid chain: Fructose-1,6-bisphosphatase class 1 (330 aa).

Mg(2+)-binding residues include glutamate 84, aspartate 103, leucine 105, and aspartate 106. Residues aspartate 106–serine 109, asparagine 196, and lysine 262 each bind substrate. Position 268 (glutamate 268) interacts with Mg(2+).

It belongs to the FBPase class 1 family. In terms of assembly, homotetramer. Mg(2+) serves as cofactor.

It is found in the cytoplasm. It carries out the reaction beta-D-fructose 1,6-bisphosphate + H2O = beta-D-fructose 6-phosphate + phosphate. It participates in carbohydrate biosynthesis; gluconeogenesis. This is Fructose-1,6-bisphosphatase class 1 from Shewanella baltica (strain OS185).